Consider the following 261-residue polypeptide: Acyl-[acyl-carrier-protein]--UDP-N-acetylglucosamine O-acyltransferase (261 aa).

Belongs to the transferase hexapeptide repeat family. LpxA subfamily. Homotrimer.

It is found in the cytoplasm. The catalysed reaction is a (3R)-hydroxyacyl-[ACP] + UDP-N-acetyl-alpha-D-glucosamine = a UDP-3-O-[(3R)-3-hydroxyacyl]-N-acetyl-alpha-D-glucosamine + holo-[ACP]. It functions in the pathway glycolipid biosynthesis; lipid IV(A) biosynthesis; lipid IV(A) from (3R)-3-hydroxytetradecanoyl-[acyl-carrier-protein] and UDP-N-acetyl-alpha-D-glucosamine: step 1/6. Functionally, involved in the biosynthesis of lipid A, a phosphorylated glycolipid that anchors the lipopolysaccharide to the outer membrane of the cell. The chain is Acyl-[acyl-carrier-protein]--UDP-N-acetylglucosamine O-acyltransferase from Paracoccus denitrificans (strain Pd 1222).